The chain runs to 459 residues: Glycosyl hydrolase family 109 protein (459 aa).

A signal peptide (tat-type signal) is located at residues 1 to 45; it reads MAGDESRSNPFSRRTLLRTSAAAGAGLGVAGLSTGYGAAQPVRPA. Residues 70–71, Asp-92, 141–144, 161–162, and Asn-190 each bind NAD(+); these read NR, WEWH, and EC. Substrate is bound by residues Tyr-219, Arg-238, 250 to 253, and Tyr-332; that span reads YPTH. Position 250 (Tyr-250) interacts with NAD(+). A disordered region spans residues 440–459; that stretch reads DFTRGRWQTPHPGVDSPKPA.

Belongs to the Gfo/Idh/MocA family. Glycosyl hydrolase 109 subfamily. The cofactor is NAD(+). In terms of processing, predicted to be exported by the Tat system. The position of the signal peptide cleavage has not been experimentally proven.

Functionally, glycosidase. In Saccharopolyspora erythraea (strain ATCC 11635 / DSM 40517 / JCM 4748 / NBRC 13426 / NCIMB 8594 / NRRL 2338), this protein is Glycosyl hydrolase family 109 protein.